Reading from the N-terminus, the 552-residue chain is Probable inorganic phosphate transporter 1-10 (552 aa).

The Cytoplasmic segment spans residues 1–22 (MAPIGVLTALDQARTQYYHFKA). Residues 23-43 (IVIAGMGLFTDSYDLFCIAPV) traverse the membrane as a helical segment. At 44–68 (MKIVGRVYYSDGGARPGVTPPAVVS) the chain is on the extracellular side. Residues 69-89 (ATVGVALLGAVIGNVVFGALG) traverse the membrane as a helical segment. Over 90–96 (DRVGRRR) the chain is Cytoplasmic. Residues 97–117 (VYGACLLLMVCSSVGSGFSVC) traverse the membrane as a helical segment. Topologically, residues 118–123 (RTRRCA) are extracellular. A helical membrane pass occupies residues 124–144 (LASLCFFRFLLGVGVGGDYPL). Residues 145–158 (SATIMSEFANRRTR) lie on the Cytoplasmic side of the membrane. A helical membrane pass occupies residues 159-179 (GAFIAAVFSMQGFGILASSAV). The Extracellular segment spans residues 180–203 (TMAVAAAFDHYTGYPAPLDTPECA). A helical transmembrane segment spans residues 204-224 (DLAWRIILMAGAVPAALTYYW). Topologically, residues 225-295 (RMSMPETARY…RRFVRQHGRD (71 aa)) are cytoplasmic. A helical transmembrane segment spans residues 296–316 (LFACAAAWFLLDIPYYSSTLF). Residues 317–342 (QSQIYRPLFPAPGLINAFQEAFNVAK) are Extracellular-facing. The chain crosses the membrane as a helical span at residues 343-363 (FQAVIAVASTIPGYFVAVLLI). The Cytoplasmic portion of the chain corresponds to 364 to 369 (DRVGRR). A helical transmembrane segment spans residues 370-390 (CLQMAGFLLMAVFLFALAGPY). Topologically, residues 391-397 (DGYWRDH) are extracellular. A helical membrane pass occupies residues 398-418 (GAHAGYIVLYSLTFFSANLGP). The Cytoplasmic segment spans residues 419-439 (NTTTFILPAELFPARFRSTCH). The chain crosses the membrane as a helical span at residues 440–460 (GLSGAAGKLGALVGSIGFLWA). At 461 to 473 (SQQKDGAAAGHLP) the chain is on the extracellular side. A helical transmembrane segment spans residues 474 to 494 (GIGMMYALFVLGGICLLGLAL). Residues 495 to 552 (TYVFTPETMMRSLEENESDRAQTQVGDGGSDTEAAKSPASMASSHLSMSPILPARVSV) are Cytoplasmic-facing. Positions 507–540 (LEENESDRAQTQVGDGGSDTEAAKSPASMASSHL) are disordered.

It belongs to the major facilitator superfamily. Phosphate:H(+) symporter (TC 2.A.1.9) family. Expressed at low levels in roots.

It localises to the membrane. Its function is as follows. High-affinity transporter for external inorganic phosphate. This chain is Probable inorganic phosphate transporter 1-10 (PHT1-10), found in Oryza sativa subsp. japonica (Rice).